The primary structure comprises 156 residues: 6,7-dimethyl-8-ribityllumazine synthase (156 aa).

5-amino-6-(D-ribitylamino)uracil-binding positions include Phe23, 57–59, and 81–83; these read AFE and TVI. 86 to 87 contributes to the (2S)-2-hydroxy-3-oxobutyl phosphate binding site; sequence ST. The active-site Proton donor is the His89. Residue Phe114 coordinates 5-amino-6-(D-ribitylamino)uracil. Arg128 contacts (2S)-2-hydroxy-3-oxobutyl phosphate.

This sequence belongs to the DMRL synthase family. As to quaternary structure, forms an icosahedral capsid composed of 60 subunits, arranged as a dodecamer of pentamers.

The catalysed reaction is (2S)-2-hydroxy-3-oxobutyl phosphate + 5-amino-6-(D-ribitylamino)uracil = 6,7-dimethyl-8-(1-D-ribityl)lumazine + phosphate + 2 H2O + H(+). It functions in the pathway cofactor biosynthesis; riboflavin biosynthesis; riboflavin from 2-hydroxy-3-oxobutyl phosphate and 5-amino-6-(D-ribitylamino)uracil: step 1/2. Functionally, catalyzes the formation of 6,7-dimethyl-8-ribityllumazine by condensation of 5-amino-6-(D-ribitylamino)uracil with 3,4-dihydroxy-2-butanone 4-phosphate. This is the penultimate step in the biosynthesis of riboflavin. The protein is 6,7-dimethyl-8-ribityllumazine synthase of Shouchella clausii (strain KSM-K16) (Alkalihalobacillus clausii).